We begin with the raw amino-acid sequence, 86 residues long: Small ribosomal subunit protein bS20 (86 aa).

This sequence belongs to the bacterial ribosomal protein bS20 family.

Binds directly to 16S ribosomal RNA. The chain is Small ribosomal subunit protein bS20 from Kineococcus radiotolerans (strain ATCC BAA-149 / DSM 14245 / SRS30216).